The following is a 316-amino-acid chain: Holliday junction branch migration complex subunit RuvB (316 aa).

Positions methionine 1–tyrosine 165 are large ATPase domain (RuvB-L). Residues arginine 5, glycine 46, lysine 49, threonine 50, serine 51, glutamate 112–phenylalanine 114, arginine 155, tyrosine 165, and arginine 202 contribute to the ATP site. Position 50 (threonine 50) interacts with Mg(2+). The interval asparagine 166–aspartate 236 is small ATPAse domain (RuvB-S). The head domain (RuvB-H) stretch occupies residues glutamate 239–tryptophan 316. DNA-binding residues include lysine 294 and arginine 299.

It belongs to the RuvB family. Homohexamer. Forms an RuvA(8)-RuvB(12)-Holliday junction (HJ) complex. HJ DNA is sandwiched between 2 RuvA tetramers; dsDNA enters through RuvA and exits via RuvB. An RuvB hexamer assembles on each DNA strand where it exits the tetramer. Each RuvB hexamer is contacted by two RuvA subunits (via domain III) on 2 adjacent RuvB subunits; this complex drives branch migration. In the full resolvosome a probable DNA-RuvA(4)-RuvB(12)-RuvC(2) complex forms which resolves the HJ.

The protein resides in the cytoplasm. The catalysed reaction is ATP + H2O = ADP + phosphate + H(+). Its function is as follows. The RuvA-RuvB-RuvC complex processes Holliday junction (HJ) DNA during genetic recombination and DNA repair, while the RuvA-RuvB complex plays an important role in the rescue of blocked DNA replication forks via replication fork reversal (RFR). RuvA specifically binds to HJ cruciform DNA, conferring on it an open structure. The RuvB hexamer acts as an ATP-dependent pump, pulling dsDNA into and through the RuvAB complex. RuvB forms 2 homohexamers on either side of HJ DNA bound by 1 or 2 RuvA tetramers; 4 subunits per hexamer contact DNA at a time. Coordinated motions by a converter formed by DNA-disengaged RuvB subunits stimulates ATP hydrolysis and nucleotide exchange. Immobilization of the converter enables RuvB to convert the ATP-contained energy into a lever motion, pulling 2 nucleotides of DNA out of the RuvA tetramer per ATP hydrolyzed, thus driving DNA branch migration. The RuvB motors rotate together with the DNA substrate, which together with the progressing nucleotide cycle form the mechanistic basis for DNA recombination by continuous HJ branch migration. Branch migration allows RuvC to scan DNA until it finds its consensus sequence, where it cleaves and resolves cruciform DNA. In Mycoplasmopsis synoviae (strain 53) (Mycoplasma synoviae), this protein is Holliday junction branch migration complex subunit RuvB.